The chain runs to 710 residues: Cyclin-dependent kinase G-2 (710 aa).

The segment at 1 to 350 (MAAGRHGGYR…ETPEPVKPPH (350 aa)) is disordered. Residues 8 to 30 (GYRDYEARERELDAEASRRSKEQ) show a composition bias toward basic and acidic residues. A compositionally biased stretch (basic residues) spans 31-40 (QHHHHPSGRH). The span at 41 to 64 (QRGDSDPRCEADRRRDGGRSRGGR) shows a compositional bias: basic and acidic residues. Low complexity predominate over residues 124-133 (SVVAASASSP). Residues 144 to 163 (WDRDSPKPMHSDVAKGKKAV) are compositionally biased toward basic and acidic residues. Residues 170-182 (LPLPPPPPLPPQD) show a composition bias toward pro residues. 2 stretches are compositionally biased toward basic and acidic residues: residues 183-195 (HIPE…KSPM) and 209-218 (LQEHAESRVM). The span at 299–308 (DENEDLEVDK) shows a compositional bias: acidic residues. Positions 335–344 (YEVRRSETPE) are enriched in basic and acidic residues. The region spanning 365–656 (FERLNKINEG…ADAALQHEWF (292 aa)) is the Protein kinase domain. ATP-binding positions include 371–379 (INEGTYGVV) and lysine 394. Residue threonine 375 is modified to Phosphothreonine. Residue tyrosine 376 is modified to Phosphotyrosine. Aspartate 489 serves as the catalytic Proton acceptor. Serine 516 carries the post-translational modification Phosphoserine. At threonine 522 the chain carries Phosphothreonine.

The protein belongs to the protein kinase superfamily. CMGC Ser/Thr protein kinase family. CDC2/CDKX subfamily.

The catalysed reaction is L-seryl-[protein] + ATP = O-phospho-L-seryl-[protein] + ADP + H(+). It carries out the reaction L-threonyl-[protein] + ATP = O-phospho-L-threonyl-[protein] + ADP + H(+). It catalyses the reaction [DNA-directed RNA polymerase] + ATP = phospho-[DNA-directed RNA polymerase] + ADP + H(+). This chain is Cyclin-dependent kinase G-2 (CDKG-2), found in Oryza sativa subsp. indica (Rice).